The sequence spans 463 residues: uncharacterized protein (463 aa).

11 helical membrane passes run 6–26 (ILPV…FMLL), 31–51 (TFIS…SLSA), 60–80 (FIYA…IVSM), 101–123 (VRGP…LFFW), 130–152 (LIGA…AAMA), 189–209 (ASIP…FIMI), 242–262 (SILA…MLLF), 269–289 (ATAL…FFVY), 304–324 (GFKF…FFYL), 413–433 (AIWV…AAIC), and 443–463 (KNFI…VMML).

The protein resides in the cell membrane. This is an uncharacterized protein from Bacillus subtilis (strain 168).